Consider the following 210-residue polypeptide: Oxygen-insensitive NADPH nitroreductase (210 aa).

Position 150-155 (150-155) interacts with NADP(+); sequence GVSLMG.

The protein belongs to the nitroreductase family.

Functionally, reduction of a variety of nitroaromatic compounds using NADPH as source of reducing equivalents; two electrons are transferred. Capable of reducing metronidazole; inactive RdxA renders the bacterium resistant to this compound. The reduction of metronidazole generates hydroxylamine, a potent mutagen and bactericide. In Helicobacter pylori (strain ATCC 700392 / 26695) (Campylobacter pylori), this protein is Oxygen-insensitive NADPH nitroreductase (rdxA).